Here is a 273-residue protein sequence, read N- to C-terminus: F-actin-capping protein subunit alpha (273 aa).

It belongs to the F-actin-capping protein alpha subunit family. In terms of assembly, component of the F-actin capping complex, composed of a heterodimer of an alpha and a beta subunit.

The protein localises to the cytoplasm. The protein resides in the cytoskeleton. Its subcellular location is the actin patch. In terms of biological role, F-actin-capping proteins bind in a Ca(2+)-independent manner to the fast growing ends of actin filaments (barbed end) thereby blocking the exchange of subunits at these ends. Unlike other capping proteins (such as gelsolin and severin), these proteins do not sever actin filaments. The protein is F-actin-capping protein subunit alpha (fac-1) of Neurospora crassa (strain ATCC 24698 / 74-OR23-1A / CBS 708.71 / DSM 1257 / FGSC 987).